Here is a 315-residue protein sequence, read N- to C-terminus: MAQPRIGQKVVVDVPATTANLGPGFDCLGAALDLNNRFAMRRIEGGGERFELIIEGSEGSHLRGGPENLVYRAAQRVWKAAGLEPVALEARVRLAVPPARGLGSSATAIVAGLMGANALVGEPLSKEKLLELAIDIEGHPDNVVPSLLGGLCMTAKAASQRWRVVRCEWTPSVKAVVAIPSIRLSTSEARRAMPKAIPVSDAVVNLGALTLLLQGLRTGNGDLISDGMHDRLHEPYRWRLIKGGDQVKQAAMEAGAWGCAISGAGPSVLALCEEDKGPAVSRAMVKAWEAAGVASRAPVLNLQTSGSHWQPAEDE.

ATP is bound at residue 97-107 (PPARGLGSSAT).

The protein belongs to the GHMP kinase family. Homoserine kinase subfamily.

Its subcellular location is the cytoplasm. The enzyme catalyses L-homoserine + ATP = O-phospho-L-homoserine + ADP + H(+). It functions in the pathway amino-acid biosynthesis; L-threonine biosynthesis; L-threonine from L-aspartate: step 4/5. Its function is as follows. Catalyzes the ATP-dependent phosphorylation of L-homoserine to L-homoserine phosphate. This is Homoserine kinase from Synechococcus sp. (strain CC9605).